Here is a 347-residue protein sequence, read N- to C-terminus: Ultraviolet-sensitive opsin (347 aa).

At 1-37 (MSGEEEFYLFKNGSIGGPWDGPQYHIAPPWAFYLQTA) the chain is on the extracellular side. An N-linked (GlcNAc...) asparagine glycan is attached at Asn12. A helical transmembrane segment spans residues 38-58 (FMGFVFMVGTPLNAIVLVVTI). Over 59-69 (KYKKLRQPLNY) the chain is Cytoplasmic. Residues 70-90 (ILVNISFCGFLACIICIFTVF) form a helical membrane-spanning segment. At 91-106 (VSSSQGYFVFGKHVCA) the chain is on the extracellular side. A disulfide bridge links Cys105 with Cys182. The chain crosses the membrane as a helical span at residues 107–127 (FEGFMGATAGLVTGWSLAFLA). The Cytoplasmic portion of the chain corresponds to 128-147 (FERYIVICKPLGNFRFTAKH). A helical membrane pass occupies residues 148-168 (ALVVVVATWVIGIGVAIPPFF). Topologically, residues 169–197 (GWSRYVPEGLQCSCGPDWYTVGTKYRSEY) are extracellular. The helical transmembrane segment at 198 to 218 (YTWFLFIFCFIVPLSLIIFSY) threads the bilayer. The Cytoplasmic segment spans residues 219 to 247 (SQLLSALRAVAAQQQESATTQKAEREVSR). The chain crosses the membrane as a helical span at residues 248–268 (MVVVMVGSFCVCYVPYAALAM). Over 269 to 282 (YMVNNREHGIDLRL) the chain is Extracellular. The helical transmembrane segment at 283–303 (VTIPAFFSKSSCVYNPIIYCF) threads the bilayer. At Lys291 the chain carries N6-(retinylidene)lysine. The Cytoplasmic portion of the chain corresponds to 304-347 (MNKQFRGCIMEMVCGKPMTDDSDMSSSAQRTEVSSVSSSQVSPS). Cys317 carries the S-palmitoyl cysteine lipid modification. Residues 324 to 347 (DSDMSSSAQRTEVSSVSSSQVSPS) form a disordered region. Low complexity predominate over residues 328–347 (SSSAQRTEVSSVSSSQVSPS).

The protein belongs to the G-protein coupled receptor 1 family. Opsin subfamily. Phosphorylated on some or all of the serine and threonine residues present in the C-terminal region. Cone photoreceptor cells.

Its subcellular location is the membrane. Visual pigments are the light-absorbing molecules that mediate vision. They consist of an apoprotein, opsin, covalently linked to cis-retinal. This chain is Ultraviolet-sensitive opsin, found in Melopsittacus undulatus (Budgerigar).